A 311-amino-acid chain; its full sequence is Meteorin-like protein (311 aa).

Residues 1 to 45 (MRGAVWAARRRAGQQWPRSPGPGPGPPPPPPLLLLLLLLLGGASA) form the signal peptide. A disulfide bridge connects residues Cys-52 and Cys-75. Residue Asn-103 is glycosylated (N-linked (GlcNAc...) asparagine). Intrachain disulfides connect Cys-107–Cys-143, Cys-188–Cys-260, Cys-191–Cys-284, and Cys-201–Cys-306.

It belongs to the meteorin family. In terms of processing, N-glycosylated. As to expression, highly expressed in subcutaneous adipose tissue.

It is found in the secreted. In terms of biological role, hormone induced following exercise or cold exposure that promotes energy expenditure. Induced either in the skeletal muscle after exercise or in adipose tissue following cold exposure and is present in the circulation. Able to stimulate energy expenditure associated with the browning of the white fat depots and improves glucose tolerance. Does not promote an increase in a thermogenic gene program via direct action on adipocytes, but acts by stimulating several immune cell subtypes to enter the adipose tissue and activate their prothermogenic actions. Stimulates an eosinophil-dependent increase in IL4 expression and promotes alternative activation of adipose tissue macrophages, which are required for the increased expression of the thermogenic and anti-inflammatory gene programs in fat. Required for some cold-induced thermogenic responses, suggesting a role in metabolic adaptations to cold temperatures. The protein is Meteorin-like protein (Metrnl) of Mus musculus (Mouse).